The sequence spans 359 residues: Heat-inducible transcription repressor HrcA (359 aa).

Belongs to the HrcA family.

Its function is as follows. Negative regulator of class I heat shock genes (grpE-dnaK-dnaJ and groELS operons). Prevents heat-shock induction of these operons. The chain is Heat-inducible transcription repressor HrcA from Rhizobium meliloti (strain 1021) (Ensifer meliloti).